Here is a 223-residue protein sequence, read N- to C-terminus: Serine/threonine/tyrosine-interacting protein (223 aa).

The Tyrosine-protein phosphatase domain maps to 28–176 (EMQEILPGLF…LQEYEAIYLA (149 aa)). Positions 76–78 (FQQ) match the Interaction with FBXW7 motif. Phosphoserine occurs at positions 184, 193, and 201. Residues 197–223 (GTTGSLKRTHEEEDDFGTMQVATAQNG) are disordered.

It belongs to the protein-tyrosine phosphatase family. Non-receptor class subfamily. Interacts with MAPK1; independently of MAPK1 phosphorylation status. Interacts with CARHSP1/Crhsp-24. Interacts (via FQQ motif) with FBXW7 isoforms 1 (via F-box domain) and 3 (via F-box domain); the interaction is direct and prevents FBXW7 interaction with SKP1, a component of the SCF(FBXW7) complex. Does not interact with FBXW7 isoform 2.

It localises to the nucleus. It is found in the cytoplasm. Its subcellular location is the cytosol. In terms of biological role, catalytically inactive phosphatase. Acts as a nuclear anchor for MAPK1/MAPK3 (ERK1/ERK2). Modulates cell-fate decisions and cell migration by spatiotemporal regulation of MAPK1/MAPK3 (ERK1/ERK2). By binding to the F-box of FBXW7, prevents the assembly of FBXW7 into the SCF E3 ubiquitin-protein ligase complex, and thereby inhibits degradation of its substrates. Plays a role in spermatogenesis. In Homo sapiens (Human), this protein is Serine/threonine/tyrosine-interacting protein.